A 197-amino-acid chain; its full sequence is TLE family member 5 (197 aa).

Residues 166–197 (LSALGSQTHLSKEDKNGHDGDTHQEDDGEKSD) form a CCN domain region. Residues 170-197 (GSQTHLSKEDKNGHDGDTHQEDDGEKSD) are disordered. Basic and acidic residues predominate over residues 175 to 197 (LSKEDKNGHDGDTHQEDDGEKSD). Serine 196 bears the Phosphoserine mark.

This sequence belongs to the WD repeat Groucho/TLE family. In terms of assembly, homooligomer and heterooligomer with other family members. Binds TCF7 and the NF-kappa-B subunit RELA. Interacts with PHF12. Interacts (via Q domain) with SIX3. Interacts with SIX6. In terms of processing, ubiquitinated by XIAP/BIRC4. In terms of tissue distribution, ubiquitously expressed in developing embryos by midgestation, a wide expression is conserved in adult. In mouse, abundantly expressed in muscle, heart and brain.

The protein resides in the nucleus. In terms of biological role, transcriptional corepressor. Acts as a dominant repressor towards other family members. Inhibits NF-kappa-B-regulated gene expression. May be required for the initiation and maintenance of the differentiated state. Essential for the transcriptional repressor activity of SIX3 during retina and lens development. In Mus musculus (Mouse), this protein is TLE family member 5.